The following is a 197-amino-acid chain: MTNYPQLNKEIQDNEIKVVMHTNKGDMTFKLFPDIAPKTVENFVTHSKNGYYDGVTFHRVINDFMVQGGDPTATGMGGESIYGSAFEDEFSLEAFNLYGALSMANAGPNTNGSQFFIVQMKEVPENMLSQLADGGWPQPIVEAYGEKGGTPWLDQKHTVFGQLIEGESTLEDIANTKVGAQDKPVYDVVIESIDVEE.

The region spanning 14–195 is the PPIase cyclophilin-type domain; the sequence is NEIKVVMHTN…YDVVIESIDV (182 aa).

This sequence belongs to the cyclophilin-type PPIase family.

The catalysed reaction is [protein]-peptidylproline (omega=180) = [protein]-peptidylproline (omega=0). In terms of biological role, PPIases accelerate the folding of proteins. It catalyzes the cis-trans isomerization of proline imidic peptide bonds in oligopeptides. This is Putative peptidyl-prolyl cis-trans isomerase from Staphylococcus epidermidis (strain ATCC 35984 / DSM 28319 / BCRC 17069 / CCUG 31568 / BM 3577 / RP62A).